The primary structure comprises 1485 residues: DNA topoisomerase 2 (1485 aa).

A compositionally biased stretch (acidic residues) spans methionine 1–glycine 16. The segment at methionine 1–threonine 76 is disordered. Residues aspartate 46 to glutamate 59 are compositionally biased toward polar residues. Over residues valine 64–threonine 76 the composition is skewed to low complexity. Residues asparagine 136, asparagine 165, serine 193 to asparagine 195, and glycine 206 to lysine 213 each bind ATP. The tract at residues lysine 388–lysine 392 is interaction with DNA. Glutamine 421–lysine 423 contacts ATP. Positions cysteine 499–isoleucine 613 constitute a Toprim domain. 3 residues coordinate Mg(2+): glutamate 505, aspartate 582, and aspartate 584. Residues isoleucine 745 to leucine 1195 form the Topo IIA-type catalytic domain. The active-site O-(5'-phospho-DNA)-tyrosine intermediate is tyrosine 835. The segment at lysine 1019–asparagine 1028 is interaction with DNA. Basic and acidic residues predominate over residues glutamate 1216–asparagine 1225. A disordered region spans residues glutamate 1216–aspartate 1485. Residues arginine 1226–arginine 1242 show a composition bias toward basic residues. Residues glutamate 1260–leucine 1273 show a composition bias toward polar residues. Basic and acidic residues predominate over residues alanine 1278 to isoleucine 1307. Serine 1310 and serine 1345 each carry phosphoserine. Residues alanine 1387–serine 1396 are compositionally biased toward basic residues. Residues glycine 1413–alanine 1425 show a composition bias toward polar residues. Residue serine 1433 is modified to Phosphoserine. Residues aspartate 1473–aspartate 1485 are compositionally biased toward acidic residues.

It belongs to the type II topoisomerase family. As to quaternary structure, homodimer. It depends on Mg(2+) as a cofactor. Mn(2+) is required as a cofactor. Ca(2+) serves as cofactor. In terms of processing, phosphorylated at multiple sites at both extremities of the protein.

Its subcellular location is the nucleus. The catalysed reaction is ATP-dependent breakage, passage and rejoining of double-stranded DNA.. Control of topological states of DNA by transient breakage and subsequent rejoining of DNA strands. Topoisomerase II makes double-strand breaks. This chain is DNA topoisomerase 2 (top2), found in Schizosaccharomyces pombe (strain 972 / ATCC 24843) (Fission yeast).